A 658-amino-acid polypeptide reads, in one-letter code: Translation factor GUF1, mitochondrial (658 aa).

Residues 1-40 (MRGCLQTVRWLTSAWQRPRSYSPLSRAAPCRFFNVSIPRN) constitute a mitochondrion transit peptide. The region spanning 60-240 (DRFRNFCIVA…TVVEQIPAPV (181 aa)) is the tr-type G domain. GTP is bound by residues 69–76 (AHVDHGKS), 133–137 (DTPGH), and 187–190 (NKVD).

The protein belongs to the TRAFAC class translation factor GTPase superfamily. Classic translation factor GTPase family. LepA subfamily.

The protein resides in the mitochondrion inner membrane. The enzyme catalyses GTP + H2O = GDP + phosphate + H(+). Promotes mitochondrial protein synthesis. May act as a fidelity factor of the translation reaction, by catalyzing a one-codon backward translocation of tRNAs on improperly translocated ribosomes. Binds to mitochondrial ribosomes in a GTP-dependent manner. This chain is Translation factor GUF1, mitochondrial, found in Paracoccidioides lutzii (strain ATCC MYA-826 / Pb01) (Paracoccidioides brasiliensis).